Consider the following 245-residue polypeptide: Ribonuclease PH (245 aa).

Phosphate contacts are provided by residues R93 and 131–133; that span reads GTR.

The protein belongs to the RNase PH family. Homohexameric ring arranged as a trimer of dimers.

It carries out the reaction tRNA(n+1) + phosphate = tRNA(n) + a ribonucleoside 5'-diphosphate. In terms of biological role, phosphorolytic 3'-5' exoribonuclease that plays an important role in tRNA 3'-end maturation. Removes nucleotide residues following the 3'-CCA terminus of tRNAs; can also add nucleotides to the ends of RNA molecules by using nucleoside diphosphates as substrates, but this may not be physiologically important. Probably plays a role in initiation of 16S rRNA degradation (leading to ribosome degradation) during starvation. This chain is Ribonuclease PH, found in Corynebacterium efficiens (strain DSM 44549 / YS-314 / AJ 12310 / JCM 11189 / NBRC 100395).